The sequence spans 631 residues: Mitochondrial Rho GTPase 1 (631 aa).

Over 1 to 605 (MPAGRGRPLR…TQADLKSSTF (605 aa)) the chain is Cytoplasmic. The 167-residue stretch at 15–181 (KKDVRILLVG…FYYAQKAVLH (167 aa)) folds into the Miro 1 domain. R27, G29, K30, T31, and S32 together coordinate GTP. T31 is a Mg(2+) binding site. 2 residues coordinate Mg(2+): P48 and D70. S72 contributes to the GTP binding site. K105 bears the N6-acetyllysine mark. Positions 131, 132, 134, 162, and 163 each coordinate GTP. K166 participates in a covalent cross-link: Glycyl lysine isopeptide (Lys-Gly) (interchain with G-Cter in ubiquitin). Positions 197 to 232 (ACIKALTRIFKISDQDNDGTLNDAELNFFQRICFNT) constitute an EF-hand 1 domain. Positions 210, 212, 214, 216, and 221 each coordinate Ca(2+). Residue K248 forms a Glycyl lysine isopeptide (Lys-Gly) (interchain with G-Cter in ubiquitin) linkage. One can recognise an EF-hand 2 domain in the interval 317–352 (HAYLFLQSTFDKHDLDRDCALSPDELKDLFKVFPYI). Ca(2+)-binding residues include D330, D332, D334, A336, and E341. One can recognise a Miro 2 domain in the interval 429 to 592 (RNVFRCNVIG…FVKLTTMAMY (164 aa)). The GTP site is built by N441, C442, G443, K444, S445, G446, K460, K541, D543, T571, and C572. N441 contacts Mg(2+). A Glycyl lysine isopeptide (Lys-Gly) (interchain with G-Cter in ubiquitin) cross-link involves residue K585. A helical; Anchor for type IV membrane protein transmembrane segment spans residues 606–628 (WLRASFGATVFAVLGFAMYKALL). The Mitochondrial intermembrane segment spans residues 629–631 (KQR).

Belongs to the mitochondrial Rho GTPase family. As to quaternary structure, homodimer. Interacts with the kinesin-binding proteins TRAK1/OIP106 and TRAK2/GRIF1, forming a link between mitochondria and the trafficking apparatus of the microtubules. Interacts with RAP1GDS1. Interacts with ARMCX1. Found in a complex with KIF5B, OGT, RHOT2 and TRAK1. Post-translationally, ubiquitinated by PRKN during mitophagy, leading to its degradation and enhancement of mitophagy. Deubiquitinated by USP30. Acetylation on Lys-105 decreases sensitivity of mitochondrial transport to elevated Ca(2+) levels, increases mitochondrial transport and promotes axon growth. Deacetylated by HDAC6 which blocks mitochondrial transport and mediates axon growth inhibition.

It localises to the mitochondrion outer membrane. It carries out the reaction GTP + H2O = GDP + phosphate + H(+). The enzyme catalyses ATP + H2O = ADP + phosphate + H(+). It catalyses the reaction UTP + H2O = UDP + phosphate + H(+). Its function is as follows. Atypical mitochondrial nucleoside-triphosphatase (NTPase) involved in mitochondrial trafficking. Probably involved in control of anterograde transport of mitochondria and their subcellular distribution. Promotes mitochondrial fission during high calcium conditions. Can hydrolyze GTP, ATP and UTP. The polypeptide is Mitochondrial Rho GTPase 1 (RHOT1) (Bos taurus (Bovine)).